The sequence spans 418 residues: Zinc finger protein 566 (418 aa).

The 72-residue stretch at 6–77 folds into the KRAB domain; the sequence is VMFSDVSVDF…DRELTRGQWP (72 aa). The segment at 169–193 adopts a C2H2-type 1; degenerate zinc-finger fold; sequence KFCASKEYRKTFRHGSQFATHEIIH. 7 consecutive C2H2-type zinc fingers follow at residues 199 to 221, 227 to 249, 255 to 277, 283 to 305, 311 to 333, 339 to 361, and 367 to 389; these read YECK…QKIH, FECK…HRIH, YECK…QRIH, and YECK…HRIH. Residues lysine 314 and lysine 328 each participate in a glycyl lysine isopeptide (Lys-Gly) (interchain with G-Cter in SUMO2) cross-link.

Belongs to the krueppel C2H2-type zinc-finger protein family.

Its subcellular location is the nucleus. Functionally, may be involved in transcriptional regulation. In Pan troglodytes (Chimpanzee), this protein is Zinc finger protein 566 (ZNF566).